The sequence spans 399 residues: Endo-1,4-beta-xylanase C (399 aa).

A signal peptide spans 1–20 (MFKFSASLAALAALVPFVAA). The region spanning 21–56 (QSPEWGQCGGIGWTGPTTCVAGTTCVESNPYYSQCL) is the CBM1 domain. One can recognise a GH10 domain in the interval 81-396 (SAKLHTLAKA…KPAFNGIAAG (316 aa)). Residue Glu-212 is the Proton donor of the active site. Glu-318 acts as the Nucleophile in catalysis. Cys-346 and Cys-352 are oxidised to a cystine.

This sequence belongs to the glycosyl hydrolase 10 (cellulase F) family.

The protein resides in the secreted. The catalysed reaction is Endohydrolysis of (1-&gt;4)-beta-D-xylosidic linkages in xylans.. It functions in the pathway glycan degradation; xylan degradation. Functionally, endo-1,4-beta-xylanase involved in the hydrolysis of xylan, a major structural heterogeneous polysaccharide found in plant biomass representing the second most abundant polysaccharide in the biosphere, after cellulose. This is Endo-1,4-beta-xylanase C (xynC) from Phanerodontia chrysosporium (White-rot fungus).